We begin with the raw amino-acid sequence, 115 residues long: Putative HNH nuclease YajD (115 aa).

In terms of domain architecture, HNH spans 27–75; that stretch reads CGRCSREFVYSNLRELTVHHIDHDHTNNPEDGSNWELLCLYCHDHEHSK.

The protein belongs to the HNH nuclease family.

In Salmonella typhi, this protein is Putative HNH nuclease YajD (yajD).